The primary structure comprises 241 residues: Uridylate kinase (241 aa).

Residue 14-17 (KLSG) participates in ATP binding. Residues 22-27 (GGLGMG) are involved in allosteric activation by GTP. Gly-56 contributes to the UMP binding site. Residues Gly-57 and Arg-61 each coordinate ATP. UMP contacts are provided by residues Asp-77 and 138–145 (TGNPFFTT). Thr-165, Tyr-171, and Asp-174 together coordinate ATP.

This sequence belongs to the UMP kinase family. In terms of assembly, homohexamer.

Its subcellular location is the cytoplasm. The enzyme catalyses UMP + ATP = UDP + ADP. It functions in the pathway pyrimidine metabolism; CTP biosynthesis via de novo pathway; UDP from UMP (UMPK route): step 1/1. Allosterically activated by GTP. Inhibited by UTP. Its function is as follows. Catalyzes the reversible phosphorylation of UMP to UDP. This chain is Uridylate kinase, found in Psychrobacter sp. (strain PRwf-1).